We begin with the raw amino-acid sequence, 673 residues long: F-box/LRR-repeat protein 17 (673 aa).

The disordered stretch occupies residues Met-1–Ala-39. Residues Ser-9–Ala-39 are compositionally biased toward basic and acidic residues. An F-box domain is found at Pro-291 to Leu-338.

The protein belongs to the FBXL17 family. As to quaternary structure, part of the SCF (SKP1-CUL1-F-box) E3 ubiquitin-protein ligase complex SCF(FBXL17). Interacts with BTB domain-containing proteins; specifically recognizes and binds a conserved degron of non-consecutive residues present at the interface of BTB dimers of aberrant composition. In terms of tissue distribution, expressed in the neuro-ectoderm of embryos.

Its subcellular location is the cytoplasm. It is found in the nucleus. In terms of biological role, substrate-recognition component of the SCF(FBXL17) E3 ubiquitin ligase complex, a key component of a quality control pathway required to ensure functional dimerization of BTB domain-containing proteins (dimerization quality control, DQC). FBXL17 specifically recognizes and binds a conserved degron of non-consecutive residues present at the interface of BTB dimers of aberrant composition: aberrant BTB dimer are then ubiquitinated by the SCF(FBXL17) complex and degraded by the proteasome. The ability of the SCF(FBXL17) complex to eliminate compromised BTB dimers is required for the differentiation and survival of neural crest and neuronal cells. This chain is F-box/LRR-repeat protein 17, found in Xenopus laevis (African clawed frog).